A 247-amino-acid polypeptide reads, in one-letter code: Exosome complex component Rrp4 (247 aa).

The S1 motif domain maps to G70–K143. In terms of domain architecture, KH spans S149–I211.

It belongs to the RRP4 family. In terms of assembly, component of the archaeal exosome complex. Forms a trimer of Rrp4 and/or Csl4 subunits. The trimer associates with a hexameric ring-like arrangement composed of 3 Rrp41-Rrp42 heterodimers.

Its subcellular location is the cytoplasm. Its function is as follows. Non-catalytic component of the exosome, which is a complex involved in RNA degradation. Increases the RNA binding and the efficiency of RNA degradation. Confers strong poly(A) specificity to the exosome. In Sulfurisphaera tokodaii (strain DSM 16993 / JCM 10545 / NBRC 100140 / 7) (Sulfolobus tokodaii), this protein is Exosome complex component Rrp4.